The following is a 364-amino-acid chain: F-box/kelch-repeat protein At3g23880 (364 aa).

The F-box domain maps to 8 to 54 (MFSPHNLPLEMMEEILLRLPVKSLTRFKCVCSSWRSLISETLFALKH). Kelch repeat units follow at residues 169–215 (DYKV…SRSG) and 216–265 (IYIN…TLGD).

This Arabidopsis thaliana (Mouse-ear cress) protein is F-box/kelch-repeat protein At3g23880.